The sequence spans 126 residues: MAEIPQDLVYTRTHEWARIEGDAATVGITDHAQEELGDVVFVELPEVGSSVQAGEPFGTIESVKAVSDLYSPVSGEVTEVNTSLEESPEKVNEDPYGEGWLLRVRLSEEPDLLSPEEYARRLEEEE.

Residues 23–105 (AATVGITDHA…YGEGWLLRVR (83 aa)) enclose the Lipoyl-binding domain. At Lys-64 the chain carries N6-lipoyllysine.

Belongs to the GcvH family. In terms of assembly, the glycine cleavage system is composed of four proteins: P, T, L and H. (R)-lipoate is required as a cofactor.

Its function is as follows. The glycine cleavage system catalyzes the degradation of glycine. The H protein shuttles the methylamine group of glycine from the P protein to the T protein. The polypeptide is Glycine cleavage system H protein (Rubrobacter xylanophilus (strain DSM 9941 / JCM 11954 / NBRC 16129 / PRD-1)).